The sequence spans 505 residues: Acetyl-coenzyme A carboxylase carboxyl transferase subunit beta, chloroplastic (505 aa).

The span at 189–205 shows a compositional bias: low complexity; it reads ESVSNSKSGSSSIRTGG. Residues 189–213 form a disordered region; that stretch reads ESVSNSKSGSSSIRTGGNSSDFNRR. The region spanning 228-499 is the CoA carboxyltransferase N-terminal domain; it reads LWVQCENCYG…NQNSSRALGS (272 aa). The Zn(2+) site is built by cysteine 232, cysteine 235, cysteine 251, and cysteine 254. The segment at 232–254 adopts a C4-type zinc-finger fold; sequence CENCYGLNYKKFVSFKMHICEQC.

The protein belongs to the AccD/PCCB family. As to quaternary structure, acetyl-CoA carboxylase is a heterohexamer composed of biotin carboxyl carrier protein, biotin carboxylase and 2 subunits each of ACCase subunit alpha and ACCase plastid-coded subunit beta (accD). Zn(2+) is required as a cofactor.

It is found in the plastid. The protein resides in the chloroplast stroma. The catalysed reaction is N(6)-carboxybiotinyl-L-lysyl-[protein] + acetyl-CoA = N(6)-biotinyl-L-lysyl-[protein] + malonyl-CoA. It participates in lipid metabolism; malonyl-CoA biosynthesis; malonyl-CoA from acetyl-CoA: step 1/1. Component of the acetyl coenzyme A carboxylase (ACC) complex. Biotin carboxylase (BC) catalyzes the carboxylation of biotin on its carrier protein (BCCP) and then the CO(2) group is transferred by the transcarboxylase to acetyl-CoA to form malonyl-CoA. The protein is Acetyl-coenzyme A carboxylase carboxyl transferase subunit beta, chloroplastic of Calycanthus floridus var. glaucus (Eastern sweetshrub).